Here is a 431-residue protein sequence, read N- to C-terminus: Enolase (431 aa).

Gln167 serves as a coordination point for (2R)-2-phosphoglycerate. Glu209 (proton donor) is an active-site residue. The Mg(2+) site is built by Asp246, Glu290, and Asp317. Positions 342, 371, 372, and 393 each coordinate (2R)-2-phosphoglycerate. Catalysis depends on Lys342, which acts as the Proton acceptor.

Belongs to the enolase family. Component of the RNA degradosome, a multiprotein complex involved in RNA processing and mRNA degradation. Mg(2+) serves as cofactor.

Its subcellular location is the cytoplasm. The protein resides in the secreted. It localises to the cell surface. The enzyme catalyses (2R)-2-phosphoglycerate = phosphoenolpyruvate + H2O. It participates in carbohydrate degradation; glycolysis; pyruvate from D-glyceraldehyde 3-phosphate: step 4/5. In terms of biological role, catalyzes the reversible conversion of 2-phosphoglycerate (2-PG) into phosphoenolpyruvate (PEP). It is essential for the degradation of carbohydrates via glycolysis. This chain is Enolase, found in Yersinia pseudotuberculosis serotype O:1b (strain IP 31758).